We begin with the raw amino-acid sequence, 370 residues long: tRNA/tmRNA (uracil-C(5))-methyltransferase (370 aa).

Gln-190, Tyr-218, Asn-223, Glu-239, and Asp-299 together coordinate S-adenosyl-L-methionine. Cys-324 acts as the Nucleophile in catalysis. Glu-358 (proton acceptor) is an active-site residue.

The protein belongs to the class I-like SAM-binding methyltransferase superfamily. RNA M5U methyltransferase family. TrmA subfamily.

It carries out the reaction uridine(54) in tRNA + S-adenosyl-L-methionine = 5-methyluridine(54) in tRNA + S-adenosyl-L-homocysteine + H(+). The enzyme catalyses uridine(341) in tmRNA + S-adenosyl-L-methionine = 5-methyluridine(341) in tmRNA + S-adenosyl-L-homocysteine + H(+). Functionally, dual-specificity methyltransferase that catalyzes the formation of 5-methyluridine at position 54 (m5U54) in all tRNAs, and that of position 341 (m5U341) in tmRNA (transfer-mRNA). The sequence is that of tRNA/tmRNA (uracil-C(5))-methyltransferase from Sodalis glossinidius (strain morsitans).